A 135-amino-acid polypeptide reads, in one-letter code: FK506-binding protein 2 (135 aa).

The first 17 residues, 1-17, serve as a signal peptide directing secretion; sequence MLLKSLFLLFLTAIAFA. Residues 40–127 form the PPIase FKBP-type domain; the sequence is GDLISVHYEG…VFVAELVDIA (88 aa). A Prevents secretion from ER motif is present at residues 132-135; sequence HDEL.

This sequence belongs to the FKBP-type PPIase family. FKBP2 subfamily.

Its subcellular location is the endoplasmic reticulum. It catalyses the reaction [protein]-peptidylproline (omega=180) = [protein]-peptidylproline (omega=0). With respect to regulation, inhibited by both FK506 and rapamycin. Functionally, PPIases accelerate the folding of proteins. It catalyzes the cis-trans isomerization of proline imidic peptide bonds in oligopeptides. This Debaryomyces hansenii (strain ATCC 36239 / CBS 767 / BCRC 21394 / JCM 1990 / NBRC 0083 / IGC 2968) (Yeast) protein is FK506-binding protein 2 (FPR2).